Reading from the N-terminus, the 205-residue chain is Adenylyl-sulfate kinase (205 aa).

Gly31–Ser38 is a binding site for ATP. Catalysis depends on Ser105, which acts as the Phosphoserine intermediate.

Belongs to the APS kinase family.

The enzyme catalyses adenosine 5'-phosphosulfate + ATP = 3'-phosphoadenylyl sulfate + ADP + H(+). Its pathway is sulfur metabolism; hydrogen sulfide biosynthesis; sulfite from sulfate: step 2/3. Functionally, catalyzes the synthesis of activated sulfate. This is Adenylyl-sulfate kinase from Shewanella halifaxensis (strain HAW-EB4).